The chain runs to 291 residues: Ribosomal RNA small subunit methyltransferase A (291 aa).

Residues asparagine 27, leucine 29, glycine 54, glutamate 75, aspartate 100, and asparagine 125 each contribute to the S-adenosyl-L-methionine site.

It belongs to the class I-like SAM-binding methyltransferase superfamily. rRNA adenine N(6)-methyltransferase family. RsmA subfamily.

The protein resides in the cytoplasm. It catalyses the reaction adenosine(1518)/adenosine(1519) in 16S rRNA + 4 S-adenosyl-L-methionine = N(6)-dimethyladenosine(1518)/N(6)-dimethyladenosine(1519) in 16S rRNA + 4 S-adenosyl-L-homocysteine + 4 H(+). In terms of biological role, specifically dimethylates two adjacent adenosines (A1518 and A1519) in the loop of a conserved hairpin near the 3'-end of 16S rRNA in the 30S particle. May play a critical role in biogenesis of 30S subunits. This chain is Ribosomal RNA small subunit methyltransferase A, found in Streptococcus mutans serotype c (strain ATCC 700610 / UA159).